Reading from the N-terminus, the 587-residue chain is ATP-dependent lipid A-core flippase (587 aa).

The next 5 membrane-spanning stretches (helical) occupy residues 31-51 (LIVS…LIYL), 68-88 (LKMM…TNFI), 145-165 (GSLI…AVMF), 166-186 (YTSW…AVLI), and 259-279 (VQVI…TPLI). Residues 32–315 (IVSGVALVFN…LTAVNAQFQS (284 aa)) enclose the ABC transmembrane type-1 domain. One can recognise an ABC transporter domain in the interval 347–583 (LEFKNVSFAY…NGAYKQLHSM (237 aa)). Position 381–388 (381–388 (GRSGSGKS)) interacts with ATP.

This sequence belongs to the ABC transporter superfamily. Lipid exporter (TC 3.A.1.106) family. Homodimer.

The protein localises to the cell inner membrane. It catalyses the reaction ATP + H2O + lipid A-core oligosaccharideSide 1 = ADP + phosphate + lipid A-core oligosaccharideSide 2.. Its function is as follows. Involved in lipopolysaccharide (LPS) biosynthesis. Translocates lipid A-core from the inner to the outer leaflet of the inner membrane. Transmembrane domains (TMD) form a pore in the inner membrane and the ATP-binding domain (NBD) is responsible for energy generation. The protein is ATP-dependent lipid A-core flippase of Haemophilus influenzae (strain ATCC 51907 / DSM 11121 / KW20 / Rd).